The primary structure comprises 420 residues: MSNKHSACQVQFRVIVVGAGIGGLSAAVALANRGHSVLVLESTTKLSHVGAGVALPPTTRKWYESEGVLRAESGCIPLDGIELRKWDTGELVTRTAANPIGKQNAIHHGDMQQALLARAAQLDNISIRLGARVMDIDIDSNTVLLHNGEQVEGDVIIAADGVKSVIKPKICPPGASKAQSTGEAAYRFTLARDLLKDDEELLDLVQRSWATRWDGPSRHVVAYPVRNHQLLNVVLIHPDDGNTEESWTTVADKQDVIEHYQDWNLTLNKLIHLAPTQVPNFRMFLYPPSPVWVKGSTILLGDACHAMLPYLGQGVGQAADDAVAIATVLSTIEHREQLPLALQAYEVSRKSRVEQIQAATYQAREHLHLKDREAQAARDLQRKSASESNQNSDVVKMQHSYWVWDAAKVAQIALTELITG.

Residues 12–31 (FRVIVVGAGIGGLSAAVALA) traverse the membrane as a helical segment. The FAD site is built by E41 and A54. The N-linked (GlcNAc...) asparagine glycan is linked to N124. The active site involves R187. A glycan (N-linked (GlcNAc...) asparagine) is linked at N264. Residues D302 and V315 each contribute to the FAD site.

It belongs to the paxM FAD-dependent monooxygenase family. FAD serves as cofactor.

The protein localises to the membrane. Its pathway is secondary metabolite biosynthesis; terpenoid biosynthesis. FAD-dependent monooxygenase; part of the gene cluster that mediates the biosynthesis of the meroterpenoids nectripenoids A and B, as well as cochliquninone D and isocochliquninone E. The pathway probably begins with the HR-PKS ntnH that catalyzes two chain-extension steps to form a reduced triketide, which then primes the SAT domain in the NR-PKS ntnG to initiate three more cycles of extension to give a linear hexaketide corresponding to the polyketide part of nectripenoids. The FAD-dependent monooxygenase ntnJ then performs an oxidative decarboxylation at C11 of the ntnH/ntnG product, via an electrophilic aromatic hydroxylation with concomitant ipso-decarboxylation. The membrane-bound polyprenyl transferase ntnF then introduces a farnesyl group before the FAD-dependent monooxygenase ntnK functions as the first epoxidase on terminal C12'-C13' olefin, followed by a second epoxidation on C7'-C8' catalyzed by ntnA. The terpene cyclase/mutase ntnI then initiates the sequential tricyclic ring formation through protonation of the terminal epoxide and catalyzes the regioselective and stereoselective 6/6/6-tricyclic ring formation. The cytochrome P450 monooxygenase ntnM may then hydroxylate C1'. The sequence is that of FAD-dependent monooxygenase ntnJ from Nectria sp.